Here is a 589-residue protein sequence, read N- to C-terminus: Protein sprouty (589 aa).

Disordered regions lie at residues 1 to 37 (MDRR…GVDH), 102 to 194 (RPSS…RPES), and 239 to 320 (LHLQ…MGLG). Composition is skewed to low complexity over residues 104–135 (SSLS…SSSS) and 148–162 (NNSI…INNN). The span at 163-172 (FLSHFQSAEP) shows a compositional bias: polar residues. The span at 239-272 (LHLQQHQQHLQQQQQQQQQQQQQQHLQHQQNQQH) shows a compositional bias: low complexity. Polar residues predominate over residues 276 to 286 (ATTTQATSVGS). One can recognise an SPR domain in the interval 380-499 (RCGRCRCEQC…CYGRFAGRGC (120 aa)).

This sequence belongs to the sprouty family. As to quaternary structure, interacts with DRK and RasGAP1 proteins of the Ras pathway. In ovary, expressed from stage 7 of oogenesis in the posterior follicle cells and during stage 9 when the follicle cells migrate posteriorly over the oocyte nucleus, expression is seen in the dorsal and lateral cells and is excluded from the ventral cells. Once the migration of follicle cells is complete expressed in the dorsal-anterior corner of the egg chamber. Expressed in the embryonic tracheal system, developing eye imaginal disk, embryonic chordotonal organ precursors, midline glia and wing imaginal disk.

The protein localises to the cell membrane. In terms of biological role, inhibitor of tracheal branching that restricts branch budding by antagonizing the BNL-FGF pathway (BNL: branchless, an fgf inducer of branching). Acts as an antagonist of EGFR-mediated signaling in the eye (where it is important for cell determination) midline glia, chordotonal organs, wing and ovarian follicle cells. The protein is Protein sprouty (sty) of Drosophila melanogaster (Fruit fly).